Reading from the N-terminus, the 305-residue chain is MNNLLSIEQLTGDEIRDLLALGHRLKAERGHHERLPLKGQTWALIFSKSSTRTRVSFEVGISELGGRPMFLSVHDIQLGRGEPIKDTARVLGRMIHGAAIRTYGQQEVEEFASFSGIPTINALTDEEHPCQILADLLTIEEIYGPGSWKDMKIAFVGDGDNNMSRSWMWAAKRLGFTLAIGAPTNYLPLEDFRRHLDCENVIFTTDPVEAVKGASVINTDVWLSMGQESEGLSKEKHFYPYQVNRELLEHAASGHSVFHCLPAYRGKEITEDVLEHFAPVIFREAENRVHAQKAVLATLADARRG.

Carbamoyl phosphate is bound by residues 50–53 (STRT), glutamine 77, arginine 101, and 128–131 (HPCQ). L-ornithine contacts are provided by residues asparagine 162, aspartate 220, and 224–225 (SM). Carbamoyl phosphate is bound by residues 260-261 (CL) and arginine 288.

Belongs to the aspartate/ornithine carbamoyltransferase superfamily. OTCase family.

It localises to the cytoplasm. The enzyme catalyses carbamoyl phosphate + L-ornithine = L-citrulline + phosphate + H(+). It functions in the pathway amino-acid degradation; L-arginine degradation via ADI pathway; carbamoyl phosphate from L-arginine: step 2/2. Functionally, reversibly catalyzes the transfer of the carbamoyl group from carbamoyl phosphate (CP) to the N(epsilon) atom of ornithine (ORN) to produce L-citrulline. In Akkermansia muciniphila (strain ATCC BAA-835 / DSM 22959 / JCM 33894 / BCRC 81048 / CCUG 64013 / CIP 107961 / Muc), this protein is Ornithine carbamoyltransferase.